Reading from the N-terminus, the 448-residue chain is tRNA(Ile)-lysidine synthase (448 aa).

28–33 lines the ATP pocket; it reads STGVDS.

Belongs to the tRNA(Ile)-lysidine synthase family.

The protein resides in the cytoplasm. The catalysed reaction is cytidine(34) in tRNA(Ile2) + L-lysine + ATP = lysidine(34) in tRNA(Ile2) + AMP + diphosphate + H(+). In terms of biological role, ligates lysine onto the cytidine present at position 34 of the AUA codon-specific tRNA(Ile) that contains the anticodon CAU, in an ATP-dependent manner. Cytidine is converted to lysidine, thus changing the amino acid specificity of the tRNA from methionine to isoleucine. The protein is tRNA(Ile)-lysidine synthase of Lactiplantibacillus plantarum (strain ATCC BAA-793 / NCIMB 8826 / WCFS1) (Lactobacillus plantarum).